The primary structure comprises 881 residues: Heat shock protein 70 homolog LHS1 (881 aa).

The first 20 residues, 1–20, serve as a signal peptide directing secretion; that stretch reads MRNVLRLLFLTAFVAIGSLA. Residues Asn-128, Asn-458, Asn-474, Asn-481, Asn-489, Asn-527, and Asn-844 are each glycosylated (N-linked (GlcNAc...) asparagine). Positions 833–844 are enriched in basic and acidic residues; that stretch reads RKLEQEKSRNNN. Positions 833-881 are disordered; that stretch reads RKLEQEKSRNNNETESTVINSADDKTTIVNDKTTESNPSSEEDILHDEL. A compositionally biased stretch (polar residues) spans 859–871; the sequence is TIVNDKTTESNPS. A compositionally biased stretch (acidic residues) spans 872–881; sequence SEEDILHDEL. A Prevents secretion from ER motif is present at residues 878–881; it reads HDEL.

The protein belongs to the heat shock protein 70 family. Interacts with the heat shock protein 70 (HSP70) KAR2, and this stimulates nucleotide exchange on KAR2. KAR2 in turn acts to stimulate the ATPase activity of LHS1. In terms of processing, N-glycosylated.

The protein localises to the endoplasmic reticulum lumen. It carries out the reaction ATP + H2O = ADP + phosphate + H(+). Its function is as follows. Chaperone required for protein translocation and folding in the endoplasmic reticulum. This chain is Heat shock protein 70 homolog LHS1 (LHS1), found in Saccharomyces cerevisiae (strain ATCC 204508 / S288c) (Baker's yeast).